The chain runs to 876 residues: Alanine--tRNA ligase (876 aa).

The Zn(2+) site is built by His565, His569, Cys667, and His671.

This sequence belongs to the class-II aminoacyl-tRNA synthetase family. Requires Zn(2+) as cofactor.

Its subcellular location is the cytoplasm. The enzyme catalyses tRNA(Ala) + L-alanine + ATP = L-alanyl-tRNA(Ala) + AMP + diphosphate. In terms of biological role, catalyzes the attachment of alanine to tRNA(Ala) in a two-step reaction: alanine is first activated by ATP to form Ala-AMP and then transferred to the acceptor end of tRNA(Ala). Also edits incorrectly charged Ser-tRNA(Ala) and Gly-tRNA(Ala) via its editing domain. This chain is Alanine--tRNA ligase, found in Staphylococcus saprophyticus subsp. saprophyticus (strain ATCC 15305 / DSM 20229 / NCIMB 8711 / NCTC 7292 / S-41).